A 432-amino-acid polypeptide reads, in one-letter code: Trigger factor (432 aa).

Residues 161–246 (EDRVTIDFSG…LKKVEERELP (86 aa)) enclose the PPIase FKBP-type domain.

This sequence belongs to the FKBP-type PPIase family. Tig subfamily.

It localises to the cytoplasm. It catalyses the reaction [protein]-peptidylproline (omega=180) = [protein]-peptidylproline (omega=0). Functionally, involved in protein export. Acts as a chaperone by maintaining the newly synthesized protein in an open conformation. Functions as a peptidyl-prolyl cis-trans isomerase. The sequence is that of Trigger factor from Enterobacter sp. (strain 638).